The primary structure comprises 702 residues: Choline transporter-like protein 5-A (702 aa).

Residues 21 to 41 (VLCCVLFVIVILGYIALGTVA) traverse the membrane as a helical segment. Residues 42 to 225 (WIHGDPRKVI…KIVEDYASCW (184 aa)) lie on the Extracellular side of the membrane. Residues Asn-120, Asn-173, and Asn-180 are each glycosylated (N-linked (GlcNAc...) asparagine). The chain crosses the membrane as a helical span at residues 226 to 246 (YWIVIGLFIALVISLIFILLL). Over 247 to 249 (RFT) the chain is Cytoplasmic. Residues 250–270 (AGFLLWFIIFAVILLVAYGIW) form a helical membrane-spanning segment. The Extracellular portion of the chain corresponds to 271-308 (HCYWEFAVLRETPGADVTISDIGFQTDLHVYLQLSQTW). The helical transmembrane segment at 309–329 (LVFMVTLGLTEASIVLMLIFL) threads the bilayer. The Cytoplasmic portion of the chain corresponds to 330–334 (RKRVR). The chain crosses the membrane as a helical span at residues 335–355 (IAIALLREGSRAISYIMSALF). Topologically, residues 356 to 357 (YP) are extracellular. The chain crosses the membrane as a helical span at residues 358-378 (IITFVLLAICISYWAMTALFL). Residues 379 to 443 (ASSGDAVYKV…RYIFILQLCN (65 aa)) lie on the Cytoplasmic side of the membrane. A helical transmembrane segment spans residues 444-464 (LLVFLWLVNFTIALGQCTVAG). At 465-498 (AFASYYWARRKPADIPPCPVFSSFSRALRYHTGS) the chain is on the extracellular side. Residues 499–519 (LAFGSLILAVVQLIRVILEYL) form a helical membrane-spanning segment. Residues 520 to 593 (DHKLKGAHNA…RVAVLDKVTD (74 aa)) are Cytoplasmic-facing. Residues 594–614 (FLLFLGKLLIAGSVGVIAFFL) traverse the membrane as a helical segment. The Extracellular portion of the chain corresponds to 615–632 (FTRKIPIIQEEVPVLNYY). Residues 633–653 (CVPLLTVILGSYLIAHSFFSV) form a helical membrane-spanning segment. Residues 654–699 (YAMCVDTLFLCFCEDLERNDGTTAKPFFMSPGLKRILGKAEQSPKK) lie on the Cytoplasmic side of the membrane.

It belongs to the CTL (choline transporter-like) family.

The protein resides in the cell membrane. It catalyses the reaction choline(out) + n H(+)(in) = choline(in) + n H(+)(out). In terms of biological role, choline/H+ antiporter. This chain is Choline transporter-like protein 5-A (slc44a5a), found in Danio rerio (Zebrafish).